We begin with the raw amino-acid sequence, 260 residues long: Ribonuclease PH (260 aa).

Phosphate is bound by residues Arg-87 and 125 to 127; that span reads GTR. The tract at residues 232-260 is disordered; sequence LAAPPAAGPPAPERAGAGSGSGGKGTGSR. Over residues 248-260 the composition is skewed to gly residues; it reads AGSGSGGKGTGSR.

This sequence belongs to the RNase PH family. As to quaternary structure, homohexameric ring arranged as a trimer of dimers.

The catalysed reaction is tRNA(n+1) + phosphate = tRNA(n) + a ribonucleoside 5'-diphosphate. Phosphorolytic 3'-5' exoribonuclease that plays an important role in tRNA 3'-end maturation. Removes nucleotide residues following the 3'-CCA terminus of tRNAs; can also add nucleotides to the ends of RNA molecules by using nucleoside diphosphates as substrates, but this may not be physiologically important. Probably plays a role in initiation of 16S rRNA degradation (leading to ribosome degradation) during starvation. The sequence is that of Ribonuclease PH from Parafrankia sp. (strain EAN1pec).